Here is a 1872-residue protein sequence, read N- to C-terminus: Plexin-A3 (1872 aa).

Positions 1–19 are cleaved as a signal peptide; it reads MPTVCLLPLLFFTIGGCLG. One can recognise a Sema domain in the interval 20–489; it reads SSRPFRTFVV…SEKQVSQLPV (470 aa). The Extracellular segment spans residues 20–1220; sequence SSRPFRTFVV…ITADRALTLP (1201 aa). N-linked (GlcNAc...) asparagine glycosylation is present at N60. 9 disulfide bridges follow: C78–C87, C113–C121, C267–C388, C283–C339, C357–C376, C492–C509, C498–C540, C501–C518, and C512–C524. N549 carries an N-linked (GlcNAc...) asparagine glycan. C575 and C595 are joined by a disulfide. 4 consecutive IPT/TIG domains span residues 841–934, 936–1021, 1024–1123, and 1126–1212; these read PRIT…YSFV, PTFD…YTYT, PTVT…FTYY, and PSFE…LHIT. N1163 is a glycosylation site (N-linked (GlcNAc...) asparagine). Residues 1221-1241 form a helical membrane-spanning segment; that stretch reads AMVGLAAGGGLLLLAITVVLV. Positions 1240–1294 form a coiled coil; sequence LVAYKRKTQDADRTLKRLQLQMDNLESRVALECKEAFAELQTDINELTNHMDGVQ. The Cytoplasmic portion of the chain corresponds to 1242–1872; it reads AYKRKTQDAD…QIITLVSSSS (631 aa). Position 1597 is a phosphoserine (S1597).

This sequence belongs to the plexin family. Detected in embryonic hindbrain, spinal cord, dorsal root ganglion, trigeminal ganglion and superior cervical ganglion. In newborns, detected throughout all layers of the hippocampus.

It is found in the cell membrane. Its function is as follows. Coreceptor for SEMA3A and SEMA3F. Necessary for signaling by class 3 semaphorins and subsequent remodeling of the cytoskeleton. Plays a role in axon guidance in the developing nervous system. Regulates the migration of sympathetic neurons, but not of neural crest precursors. Required for normal dendrite spine morphology in pyramidal neurons. May play a role in regulating semaphorin-mediated programmed cell death in the developing nervous system. Class 3 semaphorins bind to a complex composed of a neuropilin and a plexin. The plexin modulates the affinity of the complex for specific semaphorins, and its cytoplasmic domain is required for the activation of down-stream signaling events in the cytoplasm. In Mus musculus (Mouse), this protein is Plexin-A3 (Plxna3).